We begin with the raw amino-acid sequence, 534 residues long: CTP synthase (534 aa).

The tract at residues 1 to 267 (MTKYIFVTGG…GDLIIERLAL (267 aa)) is amidoligase domain. Ser13 lines the CTP pocket. A UTP-binding site is contributed by Ser13. 14-19 (SVGKGI) contacts ATP. Tyr54 is an L-glutamine binding site. Asp71 lines the ATP pocket. The Mg(2+) site is built by Asp71 and Glu141. CTP contacts are provided by residues 148–150 (DIE), 188–193 (KTKPTQ), and Lys224. UTP contacts are provided by residues 188–193 (KTKPTQ) and Lys224. Residues 292–534 (TVAIVGKYVE…VQAALEQIAE (243 aa)) enclose the Glutamine amidotransferase type-1 domain. Position 354 (Gly354) interacts with L-glutamine. Cys381 serves as the catalytic Nucleophile; for glutamine hydrolysis. Residues 382-385 (LGMQ), Glu405, and Arg462 contribute to the L-glutamine site. Catalysis depends on residues His507 and Glu509.

Belongs to the CTP synthase family. As to quaternary structure, homotetramer.

It catalyses the reaction UTP + L-glutamine + ATP + H2O = CTP + L-glutamate + ADP + phosphate + 2 H(+). The catalysed reaction is L-glutamine + H2O = L-glutamate + NH4(+). The enzyme catalyses UTP + NH4(+) + ATP = CTP + ADP + phosphate + 2 H(+). Its pathway is pyrimidine metabolism; CTP biosynthesis via de novo pathway; CTP from UDP: step 2/2. Allosterically activated by GTP, when glutamine is the substrate; GTP has no effect on the reaction when ammonia is the substrate. The allosteric effector GTP functions by stabilizing the protein conformation that binds the tetrahedral intermediate(s) formed during glutamine hydrolysis. Inhibited by the product CTP, via allosteric rather than competitive inhibition. In terms of biological role, catalyzes the ATP-dependent amination of UTP to CTP with either L-glutamine or ammonia as the source of nitrogen. Regulates intracellular CTP levels through interactions with the four ribonucleotide triphosphates. The protein is CTP synthase of Herpetosiphon aurantiacus (strain ATCC 23779 / DSM 785 / 114-95).